Reading from the N-terminus, the 372-residue chain is Phospho-N-acetylmuramoyl-pentapeptide-transferase (372 aa).

The next 10 membrane-spanning stretches (helical) occupy residues 25–45 (RSLLSILTSLAIGLMLGPVMI), 73–93 (TMGGVLILMSIGISTLLWADL), 98–118 (VWIVLGVMVVFGAVGWADDWI), 134–154 (FFWTSVASLGAGISLYVIAQN), 176–196 (SIPLSAVPLGIAFIIFTYLVI), 211–231 (GLAIMPIVMVAAGLGVFAYLA), 251–271 (LVVICSAMVGAGLAFLWYNAH), 275–295 (IFMGDVGALALGAMLGTIAVM), 300–320 (IVFAIMGGVFVMEAISVFLQI), and 349–369 (QVVTRFWIITIMLVVLGLMTL).

The protein belongs to the glycosyltransferase 4 family. MraY subfamily. It depends on Mg(2+) as a cofactor.

The protein localises to the cell inner membrane. The catalysed reaction is UDP-N-acetyl-alpha-D-muramoyl-L-alanyl-gamma-D-glutamyl-meso-2,6-diaminopimeloyl-D-alanyl-D-alanine + di-trans,octa-cis-undecaprenyl phosphate = di-trans,octa-cis-undecaprenyl diphospho-N-acetyl-alpha-D-muramoyl-L-alanyl-D-glutamyl-meso-2,6-diaminopimeloyl-D-alanyl-D-alanine + UMP. Its pathway is cell wall biogenesis; peptidoglycan biosynthesis. Its function is as follows. Catalyzes the initial step of the lipid cycle reactions in the biosynthesis of the cell wall peptidoglycan: transfers peptidoglycan precursor phospho-MurNAc-pentapeptide from UDP-MurNAc-pentapeptide onto the lipid carrier undecaprenyl phosphate, yielding undecaprenyl-pyrophosphoryl-MurNAc-pentapeptide, known as lipid I. The chain is Phospho-N-acetylmuramoyl-pentapeptide-transferase from Acinetobacter baylyi (strain ATCC 33305 / BD413 / ADP1).